The following is a 111-amino-acid chain: uncharacterized protein (111 aa).

A helical membrane pass occupies residues Pro-20 to Tyr-39.

The protein resides in the membrane. This is an uncharacterized protein from Saccharomyces cerevisiae (strain ATCC 204508 / S288c) (Baker's yeast).